We begin with the raw amino-acid sequence, 858 residues long: MAYHPAYTETMSMGGGSSHGGGQQYVPFATSSGSLRVELLHGNLDIWVKEAKHLPNMDGFHNRLGGMLSGLGRKKVEGEKSSKITSDPYVTVSISGAVIGRTFVISNSENPVWMQHFDVPVAHSAAEVHFVVKDSDIIGSQIMGAVGIPTEQLCSGNRIEGLFPILNSSGKPCKQGAVLGLSIQYTPMERMRLYQMGVGSGNECVGVPGTYFPLRKGGRVTLYQDAHVDDGTLPSVHLDGGIQYRHGKCWEDMADAIRQARRLIYITGWSVFHPVRLVRRTNDPTEGTLGELLKVKSQEGVRVLVLVWDDPTSRSLLGFKTQGVMNTSDEETRRFFKHSSVQVLLCPRSGGKGHSFIKKSEVGTIYTHHQKTVIVDAEAAQNRRKIVAFVGGLDLCNGRFDTPKHPLFRTLKTLHKDDFHNPNFVTTADDGPREPWHDLHSKIDGPAAYDVLANFEERWMKASKPRGIGKLKSSSDDSLLRIDRIPDIVGLSEASSANDNDPESWHVQVFRSIDSSSVKGFPKDPKEATGRNLLCGKNILIDMSIHAAYVKAIRSAQHFIYIENQYFLGSSFNWDSNKDLGANNLIPMEIALKIANKIRAREKFAAYIVIPMWPEGAPTSNPIQRILYWQHKTMQMMYQTIYKALVEVGLDSQFEPQDFLNFFCLGTREVPVGTVSVYNSPRKPPQPNANANAAQVQALKSRRFMIYVHSKGMVVDDEFVLIGSANINQRSLEGTRDTEIAMGGYQPHYSWAMKGSRPHGQIFGYRMSLWAEHLGFLEQGFEEPENMECVRRVRQLSELNWRQYAAEEVTEMSGHLLKYPVQVDRTGKVSSLPGCETFPDLGGKIIGSFLALQENLTI.

Residues 27-163 form the C2 domain; sequence PFATSSGSLR…CSGNRIEGLF (137 aa). Asp-225 is a binding site for Ca(2+). The PLD phosphodiesterase 1 domain maps to 364-399; sequence TIYTHHQKTVIVDAEAAQNRRKIVAFVGGLDLCNGR. Residues His-369, Lys-371, and Asp-376 contribute to the active site. Position 369 (His-369) interacts with a 1,2-diacyl-sn-glycero-3-phosphate. Ca(2+) contacts are provided by His-405 and His-437. Gln-565 is a binding site for a 1,2-diacyl-sn-glycero-3-phosphate. Ser-680 carries the phosphoserine modification. Residues 704–731 enclose the PLD phosphodiesterase 2 domain; the sequence is FMIYVHSKGMVVDDEFVLIGSANINQRS. Residues His-709, Lys-711, and Asp-716 contribute to the active site. Residue His-709 participates in a 1,2-diacyl-sn-glycero-3-phosphate binding. A Ca(2+)-binding site is contributed by Glu-772.

It belongs to the phospholipase D family. C2-PLD subfamily. Ca(2+) is required as a cofactor. In terms of tissue distribution, highly expressed in roots and flowers, moderately in stems, leaves and seedlings and low in siliques. Not detected in seeds.

Its subcellular location is the cytoplasm. The protein localises to the membrane. It catalyses the reaction a 1,2-diacyl-sn-glycero-3-phosphocholine + H2O = a 1,2-diacyl-sn-glycero-3-phosphate + choline + H(+). Inhibited by neomycin. Up-regulated by PIP2 binding. Hydrolyzes glycerol-phospholipids at the terminal phosphodiesteric bond to generate phosphatidic acids (PA). Plays an important role in various cellular processes, including phytohormone action, vesicular trafficking, secretion, cytoskeletal arrangement, meiosis, tumor promotion, pathogenesis, membrane deterioration and senescence. Can use phosphatidylserine (PS) and phosphatidylethanolamine (PE) as substrates only in the presence of PIP2. Can use phosphatidylcholine (PC), phosphatidylglycerol (PG) or N-acylphosphatidylethanolamine (NAPE) as substrates in the presence of PE and PIP2. Involved in membrane lipid modulation under aluminum (Al) stress and negatively modulate plant tolerance to Al. In Arabidopsis thaliana (Mouse-ear cress), this protein is Phospholipase D gamma 1.